The following is a 498-amino-acid chain: GTPase Der (498 aa).

2 consecutive EngA-type G domains span residues proline 3–leucine 166 and isoleucine 212–threonine 385. GTP contacts are provided by residues glycine 9–serine 16, aspartate 56–isoleucine 60, asparagine 118–aspartate 121, glycine 218–serine 225, aspartate 265–valine 269, and asparagine 330–aspartate 333. Residues lysine 386–aspartate 470 form the KH-like domain.

The protein belongs to the TRAFAC class TrmE-Era-EngA-EngB-Septin-like GTPase superfamily. EngA (Der) GTPase family. As to quaternary structure, associates with the 50S ribosomal subunit.

Functionally, GTPase that plays an essential role in the late steps of ribosome biogenesis. This is GTPase Der from Tolumonas auensis (strain DSM 9187 / NBRC 110442 / TA 4).